Consider the following 376-residue polypeptide: N-acetyldiaminopimelate deacetylase (376 aa).

Asp-69 is a catalytic residue. Glu-128 functions as the Proton acceptor in the catalytic mechanism.

Belongs to the peptidase M20A family. N-acetyldiaminopimelate deacetylase subfamily.

It catalyses the reaction N-acetyl-(2S,6S)-2,6-diaminopimelate + H2O = (2S,6S)-2,6-diaminopimelate + acetate. Its pathway is amino-acid biosynthesis; L-lysine biosynthesis via DAP pathway; LL-2,6-diaminopimelate from (S)-tetrahydrodipicolinate (acetylase route): step 3/3. Functionally, catalyzes the conversion of N-acetyl-diaminopimelate to diaminopimelate and acetate. The protein is N-acetyldiaminopimelate deacetylase of Bacillus cereus (strain ATCC 14579 / DSM 31 / CCUG 7414 / JCM 2152 / NBRC 15305 / NCIMB 9373 / NCTC 2599 / NRRL B-3711).